Here is a 77-residue protein sequence, read N- to C-terminus: MADTYKPADLRAKSEDELNALLLDLKREQINHRFSAATGQSENTSRVKVVRRAVARIKTLAHQSKNRAGAKTSAAKS.

It belongs to the universal ribosomal protein uL29 family.

The polypeptide is Large ribosomal subunit protein uL29 (Gluconobacter oxydans (strain 621H) (Gluconobacter suboxydans)).